The sequence spans 62 residues: Translational regulator CsrA (62 aa).

The protein belongs to the CsrA/RsmA family. In terms of assembly, homodimer; the beta-strands of each monomer intercalate to form a hydrophobic core, while the alpha-helices form wings that extend away from the core.

It is found in the cytoplasm. A key translational regulator that binds mRNA to regulate translation initiation and/or mRNA stability. Mediates global changes in gene expression, shifting from rapid growth to stress survival by linking envelope stress, the stringent response and the catabolite repression systems. Usually binds in the 5'-UTR; binding at or near the Shine-Dalgarno sequence prevents ribosome-binding, repressing translation, binding elsewhere in the 5'-UTR can activate translation and/or stabilize the mRNA. Its function is antagonized by small RNA(s). The protein is Translational regulator CsrA of Pasteurella multocida (strain Pm70).